The sequence spans 103 residues: N(4)-acetylcytidine amidohydrolase (103 aa).

Residues Ile-6–Gln-94 form the ASCH domain. The Proton acceptor role is filled by Lys-21. Thr-24 functions as the Nucleophile in the catalytic mechanism. Glu-74 serves as the catalytic Proton donor.

Belongs to the N(4)-acetylcytidine amidohydrolase family.

It carries out the reaction N(4)-acetylcytidine + H2O = cytidine + acetate + H(+). The catalysed reaction is N(4)-acetyl-2'-deoxycytidine + H2O = 2'-deoxycytidine + acetate + H(+). It catalyses the reaction N(4)-acetylcytosine + H2O = cytosine + acetate + H(+). Functionally, catalyzes the hydrolysis of N(4)-acetylcytidine (ac4C). This Salmonella heidelberg (strain SL476) protein is N(4)-acetylcytidine amidohydrolase (yqfB).